The primary structure comprises 185 residues: Kunitz-type serine protease inhibitor DrTI (185 aa).

Cystine bridges form between Cys-44-Cys-89 and Cys-139-Cys-147.

Belongs to the protease inhibitor I3 (leguminous Kunitz-type inhibitor) family.

Its subcellular location is the secreted. Inhibits bovine trypsin and human plasma kallikrein. The polypeptide is Kunitz-type serine protease inhibitor DrTI (Delonix regia (Royal poinciana)).